The following is a 66-amino-acid chain: Kappa-flavitoxin (66 aa).

5 cysteine pairs are disulfide-bonded: C3-C21, C14-C42, C27-C31, C46-C58, and C59-C64.

Belongs to the three-finger toxin family. Long-chain subfamily. Kappa-neurotoxin sub-subfamily. In terms of assembly, homo- and heterodimer; non-covalently linked. Expressed by the venom gland.

It is found in the secreted. Postsynaptic neurotoxin that binds and inhibits neuronal nicotinic acetylcholine receptors (nAChR) with high affinity (IC(50)&lt;100 nM). Is a selective, and slowly reversible antagonist of alpha-3/CHRNA3-containing and some alpha-4/CHRNA4-containing AChRs. In Bungarus flaviceps flaviceps (Red-headed krait), this protein is Kappa-flavitoxin.